A 370-amino-acid polypeptide reads, in one-letter code: 4-hydroxy-3-methylbut-2-en-1-yl diphosphate synthase (flavodoxin) (370 aa).

Cysteine 268, cysteine 271, cysteine 303, and glutamate 310 together coordinate [4Fe-4S] cluster.

Belongs to the IspG family. Requires [4Fe-4S] cluster as cofactor.

It catalyses the reaction (2E)-4-hydroxy-3-methylbut-2-enyl diphosphate + oxidized [flavodoxin] + H2O + 2 H(+) = 2-C-methyl-D-erythritol 2,4-cyclic diphosphate + reduced [flavodoxin]. Its pathway is isoprenoid biosynthesis; isopentenyl diphosphate biosynthesis via DXP pathway; isopentenyl diphosphate from 1-deoxy-D-xylulose 5-phosphate: step 5/6. Functionally, converts 2C-methyl-D-erythritol 2,4-cyclodiphosphate (ME-2,4cPP) into 1-hydroxy-2-methyl-2-(E)-butenyl 4-diphosphate. The chain is 4-hydroxy-3-methylbut-2-en-1-yl diphosphate synthase (flavodoxin) from Bacillus licheniformis (strain ATCC 14580 / DSM 13 / JCM 2505 / CCUG 7422 / NBRC 12200 / NCIMB 9375 / NCTC 10341 / NRRL NRS-1264 / Gibson 46).